Reading from the N-terminus, the 451-residue chain is Phosphoglucosamine mutase (451 aa).

Catalysis depends on serine 102, which acts as the Phosphoserine intermediate. Residues serine 102, aspartate 242, aspartate 244, and aspartate 246 each coordinate Mg(2+). The residue at position 102 (serine 102) is a Phosphoserine.

Belongs to the phosphohexose mutase family. It depends on Mg(2+) as a cofactor. Post-translationally, activated by phosphorylation.

The catalysed reaction is alpha-D-glucosamine 1-phosphate = D-glucosamine 6-phosphate. Catalyzes the conversion of glucosamine-6-phosphate to glucosamine-1-phosphate. In Staphylococcus aureus (strain bovine RF122 / ET3-1), this protein is Phosphoglucosamine mutase.